Consider the following 310-residue polypeptide: uncharacterized protein (310 aa).

2 disordered regions span residues 22–163 (LARQ…PVEH) and 178–209 (EAEAETEVREAQPGRGERHAAAAAAGTDVEGD). 2 stretches are compositionally biased toward basic and acidic residues: residues 56–66 (IIRDDHHHAGP) and 183–197 (TEVREAQPGRGERHA). Positions 198 to 209 (AAAAAGTDVEGD) are enriched in low complexity. 3 helical membrane-spanning segments follow: residues 231–251 (ALVVLQSILAVAFGAGLFIAF), 257–277 (WNSIVALVLSVMVILGLVVSV), and 286–306 (IASTLIAVAVGALITLGPLAL).

It to M.leprae ML2433.

The protein localises to the cell membrane. This is an uncharacterized protein from Mycobacterium tuberculosis (strain CDC 1551 / Oshkosh).